Reading from the N-terminus, the 241-residue chain is Probable septum site-determining protein MinC (241 aa).

This sequence belongs to the MinC family. As to quaternary structure, interacts with MinD and FtsZ.

Cell division inhibitor that blocks the formation of polar Z ring septums. Rapidly oscillates between the poles of the cell to destabilize FtsZ filaments that have formed before they mature into polar Z rings. Prevents FtsZ polymerization. The chain is Probable septum site-determining protein MinC from Rhizobium rhizogenes (strain K84 / ATCC BAA-868) (Agrobacterium radiobacter).